The sequence spans 443 residues: tRNA modification GTPase MnmE (443 aa).

Residues Arg19, Glu78, and Lys118 each contribute to the (6S)-5-formyl-5,6,7,8-tetrahydrofolate site. Positions 214–366 (GFKIAIIGPT…LISKIKNKLK (153 aa)) constitute a TrmE-type G domain. A K(+)-binding site is contributed by Asn224. GTP contacts are provided by residues 224–229 (NAGKSS), 243–249 (SEIAGTT), and 268–271 (DTAG). Ser228 serves as a coordination point for Mg(2+). K(+) contacts are provided by Ser243, Ile245, and Thr248. Thr249 is a binding site for Mg(2+). Lys443 is a binding site for (6S)-5-formyl-5,6,7,8-tetrahydrofolate.

It belongs to the TRAFAC class TrmE-Era-EngA-EngB-Septin-like GTPase superfamily. TrmE GTPase family. As to quaternary structure, homodimer. Heterotetramer of two MnmE and two MnmG subunits. K(+) serves as cofactor.

The protein resides in the cytoplasm. In terms of biological role, exhibits a very high intrinsic GTPase hydrolysis rate. Involved in the addition of a carboxymethylaminomethyl (cmnm) group at the wobble position (U34) of certain tRNAs, forming tRNA-cmnm(5)s(2)U34. The polypeptide is tRNA modification GTPase MnmE (Pelagibacter ubique (strain HTCC1062)).